The following is a 371-amino-acid chain: Opine oxidase subunit B (371 aa).

As to quaternary structure, heterodimer of a subunit A and a subunit B.

It participates in opine metabolism; octopine degradation. In terms of biological role, oxidative cleavage of octopine into L-arginine and pyruvate. The sequence is that of Opine oxidase subunit B (ooxB) from Rhizobium meliloti (Ensifer meliloti).